A 352-amino-acid chain; its full sequence is F-box/kelch-repeat protein SKIP30 (352 aa).

The region spanning 9–55 (SGLLDGIPEAVALRCLAHVPLHLHPNLELVSRSWRAAIRSHELFRVR) is the F-box domain. 5 Kelch repeats span residues 57-109 (ELRS…TTAG), 110-167 (MLFV…VLQG), 168-215 (KIVV…LVVN), 243-293 (YGWP…MTSL), and 296-351 (EVLI…TQLT).

In terms of assembly, part of a SCF (ASK-cullin-F-box) protein ligase complex. Interacts with SKP1A/ASK1.

The protein operates within protein modification; protein ubiquitination. Component of SCF(ASK-cullin-F-box) E3 ubiquitin ligase complexes, which may mediate the ubiquitination and subsequent proteasomal degradation of target proteins. This chain is F-box/kelch-repeat protein SKIP30 (SKIP30), found in Arabidopsis thaliana (Mouse-ear cress).